We begin with the raw amino-acid sequence, 159 residues long: 3-dehydroquinate dehydratase (159 aa).

The active-site Proton acceptor is Tyr-22. Substrate-binding residues include Asn-73, His-79, and Asp-86. His-99 functions as the Proton donor in the catalytic mechanism. Residues 100–101 (IS) and Arg-110 contribute to the substrate site.

The protein belongs to the type-II 3-dehydroquinase family. Homododecamer.

It carries out the reaction 3-dehydroquinate = 3-dehydroshikimate + H2O. It participates in metabolic intermediate biosynthesis; chorismate biosynthesis; chorismate from D-erythrose 4-phosphate and phosphoenolpyruvate: step 3/7. Its function is as follows. Catalyzes a trans-dehydration via an enolate intermediate. The chain is 3-dehydroquinate dehydratase from Campylobacter jejuni subsp. jejuni serotype O:6 (strain 81116 / NCTC 11828).